A 215-amino-acid chain; its full sequence is Protein-L-isoaspartate O-methyltransferase (215 aa).

Ser-62 is a catalytic residue.

The protein belongs to the methyltransferase superfamily. L-isoaspartyl/D-aspartyl protein methyltransferase family.

It is found in the cytoplasm. The enzyme catalyses [protein]-L-isoaspartate + S-adenosyl-L-methionine = [protein]-L-isoaspartate alpha-methyl ester + S-adenosyl-L-homocysteine. In terms of biological role, catalyzes the methyl esterification of L-isoaspartyl residues in peptides and proteins that result from spontaneous decomposition of normal L-aspartyl and L-asparaginyl residues. It plays a role in the repair and/or degradation of damaged proteins. The protein is Protein-L-isoaspartate O-methyltransferase of Bradyrhizobium sp. (strain BTAi1 / ATCC BAA-1182).